The sequence spans 412 residues: Divalent metal cation transporter MntH (412 aa).

The Cytoplasmic portion of the chain corresponds to 1–19; it reads MTNYRVESSSGRAARKTRL. The chain crosses the membrane as a helical span at residues 20 to 39; it reads ALMGPAFIAAIGYIDPGNFA. Residues 40–51 lie on the Periplasmic side of the membrane; sequence TNIQAGASFGYQ. The chain crosses the membrane as a helical span at residues 52–71; it reads LLWVVVWANLMAMLIQILSA. The Cytoplasmic portion of the chain corresponds to 72 to 95; that stretch reads KLGIATGKNLAEQIRDHYPRPVVW. The chain crosses the membrane as a helical span at residues 96 to 118; it reads FYWVQAEIIAMATDLAEFIGAAI. Residues 119-125 lie on the Periplasmic side of the membrane; it reads GFKLILG. A helical transmembrane segment spans residues 126–145; the sequence is VSLLQGAVLTGIATFLILML. The Cytoplasmic segment spans residues 146 to 155; the sequence is QRRGQKPLEK. Residues 156–175 traverse the membrane as a helical segment; it reads VIGGLLLFVAAAYIVELIFS. The Periplasmic segment spans residues 176–196; it reads QPNLAQLGKGMVIPSLPTSEA. The helical transmembrane segment at 197-220 threads the bilayer; sequence VFLAAGVLGATIMPHVIYLHSSLT. Residues 221–238 lie on the Cytoplasmic side of the membrane; that stretch reads QHLHGGSRQQRYSATKWD. A helical transmembrane segment spans residues 239–258; the sequence is VAIAMTIAGFVNLAMMATAA. Over 259-276 the chain is Periplasmic; the sequence is AAFHFSGHTGVADLDEAY. The chain crosses the membrane as a helical span at residues 277–297; sequence LTLQPLLSHAAATVFGLSLVA. Residues 298–327 lie on the Cytoplasmic side of the membrane; it reads AGLSSTVVGTLAGQVVMQGFIRFHIPLWVR. A helical membrane pass occupies residues 328–344; that stretch reads RTVTMLPSFIVILMGLD. Residues 345–350 lie on the Periplasmic side of the membrane; the sequence is PTRILV. A helical membrane pass occupies residues 351–370; sequence MSQVLLSFGIALALVPLLIF. The Cytoplasmic segment spans residues 371 to 387; the sequence is TSDSKLMGDLVNSKRVK. The helical transmembrane segment at 388 to 406 threads the bilayer; the sequence is QTGWVIVVLVVALNIWLLV. The Periplasmic segment spans residues 407 to 412; the sequence is GTALGL.

The protein belongs to the NRAMP family.

The protein localises to the cell inner membrane. Its function is as follows. H(+)-stimulated, divalent metal cation uptake system. The polypeptide is Divalent metal cation transporter MntH (Escherichia coli O9:H4 (strain HS)).